The primary structure comprises 497 residues: Early growth response protein 1-A (497 aa).

A compositionally biased stretch (low complexity) spans serine 139–serine 165. Disordered regions lie at residues serine 139–asparagine 169, tyrosine 175–proline 194, and proline 286–proline 309. 3 C2H2-type zinc fingers span residues tyrosine 306–histidine 330, phenylalanine 336–histidine 358, and phenylalanine 364–histidine 386. The disordered stretch occupies residues aspartate 377–phenylalanine 441. The span at arginine 381–aspartate 391 shows a compositional bias: basic residues. Low complexity predominate over residues alanine 397–phenylalanine 441.

Belongs to the EGR C2H2-type zinc-finger protein family. As to expression, expressed in the presumptive mesoderm. In blastula embryos, expressed in the dorsal marginal zone, and at the onset of gastrulation expression is specific to the Spemann organizer. As gastrulation proceeds, expressed in a ring around the yolk plug. This expression is maintained in advanced gastrulae, with weak expression also extending into the dorsal midline. By the neurula stage, expression is excluded from the notochord. In late tailbud stages, expressed in two spots in the anterior forebrain, which are connected via a bridge of cells that also show expression.

It localises to the nucleus. The protein resides in the cytoplasm. Its function is as follows. Transcriptional regulator. Recognizes and binds to the DNA sequence 5'-GCG(T/G)GGGCG-3'(EGR-site) in the promoter region of target genes. Binds double-stranded target DNA, irrespective of the cytosine methylation status. Regulates the transcription of numerous target genes, and thereby plays an important role in regulating the response to growth factors, DNA damage, and ischemia. Plays a role in the regulation of cell survival, proliferation and cell death. Mediates responses to ischemia and hypoxia; regulates the expression of proteins that are involved in inflammatory processes. Plays a role in regulating the expression of circadian clock genes. In Xenopus laevis (African clawed frog), this protein is Early growth response protein 1-A (egr1-a).